The primary structure comprises 339 residues: D-erythrose-4-phosphate dehydrogenase (339 aa).

NAD(+) is bound by residues 12-13 and Arg-81; that span reads RI. Residues 154–156, Arg-200, 213–214, and Arg-236 each bind substrate; these read SCT and TK. Residue Cys-155 is the Nucleophile of the active site. Asn-318 lines the NAD(+) pocket.

It belongs to the glyceraldehyde-3-phosphate dehydrogenase family. Epd subfamily. As to quaternary structure, homotetramer.

It is found in the cytoplasm. It catalyses the reaction D-erythrose 4-phosphate + NAD(+) + H2O = 4-phospho-D-erythronate + NADH + 2 H(+). It functions in the pathway cofactor biosynthesis; pyridoxine 5'-phosphate biosynthesis; pyridoxine 5'-phosphate from D-erythrose 4-phosphate: step 1/5. Catalyzes the NAD-dependent conversion of D-erythrose 4-phosphate to 4-phosphoerythronate. In Escherichia coli (strain UTI89 / UPEC), this protein is D-erythrose-4-phosphate dehydrogenase.